The sequence spans 196 residues: Probable malonic semialdehyde reductase RutE (196 aa).

This sequence belongs to the nitroreductase family. HadB/RutE subfamily. FMN is required as a cofactor.

It catalyses the reaction 3-hydroxypropanoate + NADP(+) = 3-oxopropanoate + NADPH + H(+). May reduce toxic product malonic semialdehyde to 3-hydroxypropionic acid, which is excreted. The sequence is that of Probable malonic semialdehyde reductase RutE from Enterobacter sp. (strain 638).